The sequence spans 266 residues: Energy-coupling factor transporter transmembrane protein EcfT (266 aa).

The next 5 helical transmembrane spans lie at 32-52 (IIVVFLANNIWSYAILIAFTV), 71-91 (PLLWLIVFTVVLQLLFSPAGG), 107-127 (LINAGYIFVRFLLIIMMSTLL), 152-172 (VPVDTLAMMLSIALRFVPTLM), and 246-266 (DTVTWLLFLLGFVAILIFRHW).

Belongs to the energy-coupling factor EcfT family. As to quaternary structure, forms a stable energy-coupling factor (ECF) transporter complex composed of 2 membrane-embedded substrate-binding proteins (S component), 2 ATP-binding proteins (A component) and 2 transmembrane proteins (T component). May be able to interact with more than 1 S component at a time.

Its subcellular location is the cell membrane. Its function is as follows. Transmembrane (T) component of an energy-coupling factor (ECF) ABC-transporter complex. Unlike classic ABC transporters this ECF transporter provides the energy necessary to transport a number of different substrates. In Levilactobacillus brevis (strain ATCC 367 / BCRC 12310 / CIP 105137 / JCM 1170 / LMG 11437 / NCIMB 947 / NCTC 947) (Lactobacillus brevis), this protein is Energy-coupling factor transporter transmembrane protein EcfT.